The chain runs to 361 residues: 3-dehydroquinate synthase (361 aa).

Residues 72 to 77 (SGEKEK), 130 to 131 (TT), Lys-142, and Lys-151 each bind NAD(+). Glu-184, His-247, and His-264 together coordinate Zn(2+).

The protein belongs to the sugar phosphate cyclases superfamily. Dehydroquinate synthase family. NAD(+) is required as a cofactor. The cofactor is Co(2+). Zn(2+) serves as cofactor.

It localises to the cytoplasm. It catalyses the reaction 7-phospho-2-dehydro-3-deoxy-D-arabino-heptonate = 3-dehydroquinate + phosphate. It functions in the pathway metabolic intermediate biosynthesis; chorismate biosynthesis; chorismate from D-erythrose 4-phosphate and phosphoenolpyruvate: step 2/7. Functionally, catalyzes the conversion of 3-deoxy-D-arabino-heptulosonate 7-phosphate (DAHP) to dehydroquinate (DHQ). This chain is 3-dehydroquinate synthase, found in Bacillus cereus (strain ATCC 14579 / DSM 31 / CCUG 7414 / JCM 2152 / NBRC 15305 / NCIMB 9373 / NCTC 2599 / NRRL B-3711).